Here is a 282-residue protein sequence, read N- to C-terminus: NH(3)-dependent NAD(+) synthetase (282 aa).

51–58 is an ATP binding site; that stretch reads GISGGVDS. Position 57 (aspartate 57) interacts with Mg(2+). Arginine 148 is a deamido-NAD(+) binding site. ATP is bound at residue threonine 168. Glutamate 173 is a binding site for Mg(2+). Positions 181 and 188 each coordinate deamido-NAD(+). The ATP site is built by lysine 197 and threonine 219. Residue 268 to 269 coordinates deamido-NAD(+); sequence HK.

This sequence belongs to the NAD synthetase family. In terms of assembly, homodimer.

The enzyme catalyses deamido-NAD(+) + NH4(+) + ATP = AMP + diphosphate + NAD(+) + H(+). It participates in cofactor biosynthesis; NAD(+) biosynthesis; NAD(+) from deamido-NAD(+) (ammonia route): step 1/1. Catalyzes the ATP-dependent amidation of deamido-NAD to form NAD. Uses ammonia as a nitrogen source. In Burkholderia lata (strain ATCC 17760 / DSM 23089 / LMG 22485 / NCIMB 9086 / R18194 / 383), this protein is NH(3)-dependent NAD(+) synthetase.